The sequence spans 299 residues: Recombination-associated protein RdgC (299 aa).

The protein belongs to the RdgC family.

It is found in the cytoplasm. It localises to the nucleoid. Its function is as follows. May be involved in recombination. This Bordetella parapertussis (strain 12822 / ATCC BAA-587 / NCTC 13253) protein is Recombination-associated protein RdgC.